Reading from the N-terminus, the 265-residue chain is Glycosylphosphatidylinositol anchor biosynthesis protein 11 (265 aa).

A run of 2 helical transmembrane segments spans residues 49-69 (LLVVPFHNIFILVGMFYSGLT) and 79-99 (GFLTSIPIQVIYNYIIYINLL). 2 N-linked (GlcNAc...) asparagine glycosylation sites follow: Asn-111 and Asn-112. Helical transmembrane passes span 137-157 (IFVSIVLSLPLFVVIILMGAP), 166-186 (LYLSLHLSQLIFNPLIILSNL), 209-229 (ILSSVLLTLGGCWLGVIPIPL), and 240-260 (ITLLVGGYLGGVVGGVLSLIV).

The protein belongs to the PIGF family.

It is found in the endoplasmic reticulum membrane. It functions in the pathway glycolipid biosynthesis; glycosylphosphatidylinositol-anchor biosynthesis. Its function is as follows. Acts in the GPI biosynthetic pathway between GlcNAc-PI synthesis and GPI transfer to protein. This Candida albicans (strain SC5314 / ATCC MYA-2876) (Yeast) protein is Glycosylphosphatidylinositol anchor biosynthesis protein 11 (GPI11).